The following is a 589-amino-acid chain: Transmembrane 9 superfamily member 1 (589 aa).

The signal sequence occupies residues 1–27 (MTVLGHPRSWSCHCLPVLILLLGIGHG). N178 carries an N-linked (GlcNAc...) asparagine glycan. 4 helical membrane-spanning segments follow: residues 237-257 (LSII…AVIL), 310-330 (VLGV…MALL), 339-359 (GAIN…SGYV), and 373-393 (VWNI…TWSV). Residue N401 is glycosylated (N-linked (GlcNAc...) asparagine). Transmembrane regions (helical) follow at residues 412-432 (ILLL…IGGI), 482-502 (GILF…SIAL), and 518-538 (SVLS…FYYA). An N-linked (GlcNAc...) asparagine glycan is attached at N542. A helical transmembrane segment spans residues 552–572 (FFGYSLLTGYVFFLMLGTISF).

This sequence belongs to the nonaspanin (TM9SF) (TC 9.A.2) family.

It localises to the lysosome membrane. Its subcellular location is the cytoplasmic vesicle. It is found in the autophagosome membrane. Its function is as follows. Plays an essential role in autophagy. This is Transmembrane 9 superfamily member 1 (Tm9sf1) from Rattus norvegicus (Rat).